Consider the following 237-residue polypeptide: Urease accessory protein UreF (237 aa).

This sequence belongs to the UreF family. As to quaternary structure, ureD, UreF and UreG form a complex that acts as a GTP-hydrolysis-dependent molecular chaperone, activating the urease apoprotein by helping to assemble the nickel containing metallocenter of UreC. The UreE protein probably delivers the nickel.

The protein localises to the cytoplasm. Its function is as follows. Required for maturation of urease via the functional incorporation of the urease nickel metallocenter. This Rhodopseudomonas palustris (strain HaA2) protein is Urease accessory protein UreF.